The following is a 520-amino-acid chain: Dual specificity tyrosine-phosphorylation-regulated kinase 4 (520 aa).

Residues 1–32 (MPASELKASEIPFHPSIKTQDPKAEEKSPKKQ) form a disordered region. Positions 19-37 (TQDPKAEEKSPKKQKVTLT) match the Bipartite nuclear localization signal motif. The span at 20–29 (QDPKAEEKSP) shows a compositional bias: basic and acidic residues. The Protein kinase domain maps to 104–400 (YEVLETIGKG…PDQALKHAWI (297 aa)). ATP is bound by residues 110-118 (IGKGSFGQV), Lys-133, and 183-186 (FELL). Residue Asp-230 is the Proton acceptor of the active site. Position 264 is a phosphotyrosine; by autocatalysis (Tyr-264). Residues 404-467 (RNLKPQPRPQ…KHVQHSGDQQ (64 aa)) form a disordered region. A compositionally biased stretch (basic and acidic residues) spans 439 to 457 (RKADEITKETTEKTKDSPT).

The protein belongs to the protein kinase superfamily. CMGC Ser/Thr protein kinase family. MNB/DYRK subfamily. Mg(2+) serves as cofactor. In terms of processing, autophosphorylation on Tyr-264 in the activation loop is required for kinase activity.

The protein resides in the cytoplasm. Its subcellular location is the nucleus. It catalyses the reaction L-seryl-[protein] + ATP = O-phospho-L-seryl-[protein] + ADP + H(+). The catalysed reaction is L-threonyl-[protein] + ATP = O-phospho-L-threonyl-[protein] + ADP + H(+). It carries out the reaction L-tyrosyl-[protein] + ATP = O-phospho-L-tyrosyl-[protein] + ADP + H(+). Its function is as follows. Possible non-essential role in spermiogenesis. This is Dual specificity tyrosine-phosphorylation-regulated kinase 4 (DYRK4) from Homo sapiens (Human).